Consider the following 319-residue polypeptide: Acetyl-coenzyme A carboxylase carboxyl transferase subunit alpha (319 aa).

The CoA carboxyltransferase C-terminal domain occupies 35-296 (NIDEEVHRLR…KAQLLEDLAD (262 aa)).

It belongs to the AccA family. As to quaternary structure, acetyl-CoA carboxylase is a heterohexamer composed of biotin carboxyl carrier protein (AccB), biotin carboxylase (AccC) and two subunits each of ACCase subunit alpha (AccA) and ACCase subunit beta (AccD).

It localises to the cytoplasm. The enzyme catalyses N(6)-carboxybiotinyl-L-lysyl-[protein] + acetyl-CoA = N(6)-biotinyl-L-lysyl-[protein] + malonyl-CoA. It functions in the pathway lipid metabolism; malonyl-CoA biosynthesis; malonyl-CoA from acetyl-CoA: step 1/1. Component of the acetyl coenzyme A carboxylase (ACC) complex. First, biotin carboxylase catalyzes the carboxylation of biotin on its carrier protein (BCCP) and then the CO(2) group is transferred by the carboxyltransferase to acetyl-CoA to form malonyl-CoA. This is Acetyl-coenzyme A carboxylase carboxyl transferase subunit alpha from Salmonella dublin (strain CT_02021853).